Reading from the N-terminus, the 196-residue chain is Elongation factor Ts (196 aa).

The tract at residues 80–83 is involved in Mg(2+) ion dislocation from EF-Tu; sequence TDFV.

It belongs to the EF-Ts family.

The protein resides in the cytoplasm. Associates with the EF-Tu.GDP complex and induces the exchange of GDP to GTP. It remains bound to the aminoacyl-tRNA.EF-Tu.GTP complex up to the GTP hydrolysis stage on the ribosome. This is Elongation factor Ts from Thermus thermophilus (strain ATCC BAA-163 / DSM 7039 / HB27).